A 347-amino-acid polypeptide reads, in one-letter code: Protein RecA (347 aa).

ATP is bound at residue 80–87 (GPESSGKT).

It belongs to the RecA family.

The protein localises to the cytoplasm. Can catalyze the hydrolysis of ATP in the presence of single-stranded DNA, the ATP-dependent uptake of single-stranded DNA by duplex DNA, and the ATP-dependent hybridization of homologous single-stranded DNAs. It interacts with LexA causing its activation and leading to its autocatalytic cleavage. In Chlorobaculum parvum (strain DSM 263 / NCIMB 8327) (Chlorobium vibrioforme subsp. thiosulfatophilum), this protein is Protein RecA.